A 344-amino-acid chain; its full sequence is Protein RecA (344 aa).

Position 66–73 (66–73 (GPESSGKT)) interacts with ATP.

It belongs to the RecA family.

It is found in the cytoplasm. In terms of biological role, can catalyze the hydrolysis of ATP in the presence of single-stranded DNA, the ATP-dependent uptake of single-stranded DNA by duplex DNA, and the ATP-dependent hybridization of homologous single-stranded DNAs. It interacts with LexA causing its activation and leading to its autocatalytic cleavage. This chain is Protein RecA, found in Azoarcus sp. (strain BH72).